The following is a 340-amino-acid chain: Phosphate acyltransferase (340 aa).

Belongs to the PlsX family. As to quaternary structure, homodimer. Probably interacts with PlsY.

The protein localises to the cytoplasm. The catalysed reaction is a fatty acyl-[ACP] + phosphate = an acyl phosphate + holo-[ACP]. It functions in the pathway lipid metabolism; phospholipid metabolism. Functionally, catalyzes the reversible formation of acyl-phosphate (acyl-PO(4)) from acyl-[acyl-carrier-protein] (acyl-ACP). This enzyme utilizes acyl-ACP as fatty acyl donor, but not acyl-CoA. The chain is Phosphate acyltransferase from Pseudomonas savastanoi pv. phaseolicola (strain 1448A / Race 6) (Pseudomonas syringae pv. phaseolicola (strain 1448A / Race 6)).